The chain runs to 132 residues: Small ribosomal subunit protein uS8 (132 aa).

Belongs to the universal ribosomal protein uS8 family. As to quaternary structure, part of the 30S ribosomal subunit. Contacts proteins S5 and S12.

In terms of biological role, one of the primary rRNA binding proteins, it binds directly to 16S rRNA central domain where it helps coordinate assembly of the platform of the 30S subunit. This chain is Small ribosomal subunit protein uS8, found in Brucella anthropi (strain ATCC 49188 / DSM 6882 / CCUG 24695 / JCM 21032 / LMG 3331 / NBRC 15819 / NCTC 12168 / Alc 37) (Ochrobactrum anthropi).